Reading from the N-terminus, the 1028-residue chain is Pro-apoptotic serine protease NMA111 (1028 aa).

The span at 1 to 10 (MEMSSKRKHS) shows a compositional bias: basic residues. Positions 1–39 (MEMSSKRKHSSGPISLRSTKHLRSDTAASPQPLTPDDQT) are disordered. The interval 85–269 (VVSIHFCQTA…AATDYFLPLD (185 aa)) is serine protease. Residues H123, D154, and S236 each act as charge relay system in the active site. PDZ domains follow at residues 292 to 377 (QWII…LLVQ) and 878 to 959 (IFCG…VTFD). The interval 1003 to 1028 (SDNLNADAMDEGRDDGISDMEPDGEK) is disordered. A compositionally biased stretch (acidic residues) spans 1019-1028 (ISDMEPDGEK).

The protein belongs to the peptidase S1C family.

The protein resides in the nucleus. Functionally, nuclear serine protease which mediates apoptosis. The chain is Pro-apoptotic serine protease NMA111 (NMA111) from Ajellomyces capsulatus (strain NAm1 / WU24) (Darling's disease fungus).